The following is a 185-amino-acid chain: Elongation factor P (185 aa).

The protein belongs to the elongation factor P family.

It is found in the cytoplasm. It participates in protein biosynthesis; polypeptide chain elongation. Its function is as follows. Involved in peptide bond synthesis. Stimulates efficient translation and peptide-bond synthesis on native or reconstituted 70S ribosomes in vitro. Probably functions indirectly by altering the affinity of the ribosome for aminoacyl-tRNA, thus increasing their reactivity as acceptors for peptidyl transferase. This chain is Elongation factor P (efp), found in Nostoc sp. (strain PCC 7120 / SAG 25.82 / UTEX 2576).